The sequence spans 381 residues: Alkanesulfonate monooxygenase (381 aa).

It belongs to the SsuD family. Homotetramer.

It carries out the reaction an alkanesulfonate + FMNH2 + O2 = an aldehyde + FMN + sulfite + H2O + 2 H(+). Its function is as follows. Catalyzes the desulfonation of aliphatic sulfonates. The protein is Alkanesulfonate monooxygenase of Escherichia coli O1:K1 / APEC.